The primary structure comprises 247 residues: Probable transcriptional regulatory protein EUBELI_00902 (247 aa).

The protein belongs to the TACO1 family.

It is found in the cytoplasm. This chain is Probable transcriptional regulatory protein EUBELI_00902, found in Lachnospira eligens (strain ATCC 27750 / DSM 3376 / VPI C15-48 / C15-B4) (Eubacterium eligens).